A 354-amino-acid chain; its full sequence is 3-dehydroquinate synthase (354 aa).

NAD(+) is bound by residues 100–104 (GATGD), 124–125 (TT), Lys136, Lys145, and 163–166 (FLKT). The Zn(2+) site is built by Glu178, His242, and His256.

It belongs to the sugar phosphate cyclases superfamily. Dehydroquinate synthase family. Requires NAD(+) as cofactor. Co(2+) serves as cofactor. Zn(2+) is required as a cofactor.

The protein resides in the cytoplasm. It carries out the reaction 7-phospho-2-dehydro-3-deoxy-D-arabino-heptonate = 3-dehydroquinate + phosphate. It participates in metabolic intermediate biosynthesis; chorismate biosynthesis; chorismate from D-erythrose 4-phosphate and phosphoenolpyruvate: step 2/7. Catalyzes the conversion of 3-deoxy-D-arabino-heptulosonate 7-phosphate (DAHP) to dehydroquinate (DHQ). The chain is 3-dehydroquinate synthase from Staphylococcus aureus (strain COL).